We begin with the raw amino-acid sequence, 122 residues long: Prefoldin subunit 1 (122 aa).

Residue Ala2 is modified to N-acetylalanine.

This sequence belongs to the prefoldin subunit beta family. Heterohexamer of two PFD-alpha type and four PFD-beta type subunits.

Binds specifically to cytosolic chaperonin (c-CPN) and transfers target proteins to it. Binds to nascent polypeptide chain and promotes folding in an environment in which there are many competing pathways for nonnative proteins. The chain is Prefoldin subunit 1 (PFDN1) from Pongo abelii (Sumatran orangutan).